The primary structure comprises 243 residues: Uridylate kinase (243 aa).

Position 12–15 (12–15) interacts with ATP; it reads KLSG. An involved in allosteric activation by GTP region spans residues 20–25; the sequence is GAKGFG. 2 residues coordinate ATP: Gly55 and Arg59. UMP is bound by residues Asp74 and 135 to 142; that span reads TGNPYFTT. 3 residues coordinate ATP: Gln163, Tyr169, and Asp172.

This sequence belongs to the UMP kinase family. In terms of assembly, homohexamer.

Its subcellular location is the cytoplasm. It carries out the reaction UMP + ATP = UDP + ADP. Its pathway is pyrimidine metabolism; CTP biosynthesis via de novo pathway; UDP from UMP (UMPK route): step 1/1. With respect to regulation, allosterically activated by GTP. Inhibited by UTP. Functionally, catalyzes the reversible phosphorylation of UMP to UDP. The protein is Uridylate kinase of Symbiobacterium thermophilum (strain DSM 24528 / JCM 14929 / IAM 14863 / T).